The primary structure comprises 471 residues: Protoporphyrinogen oxidase (471 aa).

FAD is bound by residues 16 to 21 (GGGISG), 39 to 40 (ES), Ala-47, 61 to 64 (GPNS), Val-251, Trp-408, and 446 to 448 (VGL).

This sequence belongs to the protoporphyrinogen/coproporphyrinogen oxidase family. Protoporphyrinogen oxidase subfamily. As to quaternary structure, monomer. Homodimer. FAD serves as cofactor.

It localises to the cytoplasm. Its subcellular location is the cell membrane. It catalyses the reaction protoporphyrinogen IX + 3 O2 = protoporphyrin IX + 3 H2O2. It participates in porphyrin-containing compound metabolism; protoporphyrin-IX biosynthesis; protoporphyrin-IX from protoporphyrinogen-IX: step 1/1. Its activity is regulated as follows. Strongly inhibited by acifluorfen. Functionally, catalyzes the 6-electron oxidation of protoporphyrinogen-IX to form protoporphyrin-IX. Does not oxidize coproporphyrinogen III. Involved in the classical protoporphyrin-dependent (PPD) heme b biosynthesis. The polypeptide is Protoporphyrinogen oxidase (Myxococcus xanthus).